The following is a 1839-amino-acid chain: Adenylate cyclase (1839 aa).

Disordered stretches follow at residues 1–21, 43–87, 126–245, 272–315, 332–388, and 400–468; these read MSSPTDAERVNMRREKHPQIE, ITTH…PRFS, TSLL…PIVS, KNTE…QWTA, KRKA…DSND, and ESSG…SFSK. Positions 165–211 are enriched in polar residues; it reads SQSNESRGTRSSIFFPSTSNSRRGSATSTMTSGSRSSHPPDTPPITS. A compositionally biased stretch (low complexity) spans 212-221; the sequence is QQQEQQYDQQ. The segment covering 222-233 has biased composition (basic and acidic residues); the sequence is RQQRPETREQEQ. The segment covering 332 to 355 has biased composition (basic residues); the sequence is KRKAKHHHHYHHPQHPRPPHRKHY. The segment covering 361 to 376 has biased composition (basic and acidic residues); the sequence is PIEDKAVVEKEQEPPE. Low complexity predominate over residues 407–428; sequence SASTQSVSSFSSGATGASGATG. Residues 494-574 enclose the Ras-associating domain; the sequence is RRYAIRIFNI…LNGYLKSDPL (81 aa). LRR repeat units lie at residues 632-655, 659-679, 681-702, 704-726, 727-748, 750-771, 773-794, 795-816, 817-834, 835-856, 858-879, 882-903, 905-926, 928-950, 951-971, 982-1004, 1006-1027, 1028-1048, 1051-1073, 1074-1096, 1103-1124, and 1135-1160; these read TSDIESLDVSNNANIFLPLDFIES, LSSLRMVNIRASKFPANVTDA, KLVSLDLERNFIKKVPDSIFKL, NLTIVNLQCNNLERLPPGFSKLK, NLQLLDISSNKFVNYPEVINSC, NLLQIDLSYNKIHSLPVSINQL, KLAKMNLFNNRLTSVGDLSQMK, NLRTLNLRCNRVTSIECHAPNL, QNLFLTDNRISTFDDDLT, RLRTLELQQNPITSMVCGGNYM, NMTSLSLNKAKLSSFSAELLSK, RLEKLELNENNLTQLPPEINKL, RLIYLSVARNKLESIPDEISDL, SLKSLDLHSNNLRMLMNNLEDLE, LTSLNVSSNLLTGFHGSPAKF, SLLFLSVADNNLTDSIWPLVNTF, NLKTLNLSYNNFVEISDLKLQN, LTELYLSGNNFTSLPGEAVQH, SLKVLMLNGNKLLSLPAELSQLS, RLSVLDVGSNQLKYNISNYHYDW, DLKYLNFSGNKRFEIKSALDPE, and LKQLRVLGLMDVTLKTSKVPDESVSI. Residues 1173–1439 enclose the PPM-type phosphatase domain; sequence RYGVADTLGQ…DNITILCVSL (267 aa). The 138-residue stretch at 1483–1620 folds into the Guanylate cyclase domain; the sequence is AIVFTDIKNS…PVVNKAARVS (138 aa). Residues Asp-1488 and Asp-1531 each contribute to the Mg(2+) site.

It belongs to the adenylyl cyclase class-3 family. It depends on Mg(2+) as a cofactor.

The enzyme catalyses ATP = 3',5'-cyclic AMP + diphosphate. In terms of biological role, plays essential roles in regulation of cellular metabolism by catalyzing the synthesis of a second messenger, cAMP. The sequence is that of Adenylate cyclase (CYR1) from Lachancea kluyveri (Yeast).